A 275-amino-acid polypeptide reads, in one-letter code: 4-hydroxy-tetrahydrodipicolinate reductase (275 aa).

Residues glycine 13 to methionine 18 and glycine 108 to threonine 110 each bind NAD(+). Residue histidine 164 is the Proton donor/acceptor of the active site. (S)-2,3,4,5-tetrahydrodipicolinate is bound at residue histidine 165. Residue lysine 168 is the Proton donor of the active site. Residue glycine 174–threonine 175 coordinates (S)-2,3,4,5-tetrahydrodipicolinate.

The protein belongs to the DapB family.

The protein localises to the cytoplasm. It catalyses the reaction (S)-2,3,4,5-tetrahydrodipicolinate + NAD(+) + H2O = (2S,4S)-4-hydroxy-2,3,4,5-tetrahydrodipicolinate + NADH + H(+). It carries out the reaction (S)-2,3,4,5-tetrahydrodipicolinate + NADP(+) + H2O = (2S,4S)-4-hydroxy-2,3,4,5-tetrahydrodipicolinate + NADPH + H(+). It participates in amino-acid biosynthesis; L-lysine biosynthesis via DAP pathway; (S)-tetrahydrodipicolinate from L-aspartate: step 4/4. In terms of biological role, catalyzes the conversion of 4-hydroxy-tetrahydrodipicolinate (HTPA) to tetrahydrodipicolinate. This Picosynechococcus sp. (strain ATCC 27264 / PCC 7002 / PR-6) (Agmenellum quadruplicatum) protein is 4-hydroxy-tetrahydrodipicolinate reductase.